A 386-amino-acid polypeptide reads, in one-letter code: Sulfate adenylyltransferase (386 aa).

The protein belongs to the sulfate adenylyltransferase family.

It carries out the reaction sulfate + ATP + H(+) = adenosine 5'-phosphosulfate + diphosphate. It participates in sulfur metabolism; hydrogen sulfide biosynthesis; sulfite from sulfate: step 1/3. This Persephonella marina (strain DSM 14350 / EX-H1) protein is Sulfate adenylyltransferase.